The sequence spans 873 residues: Sine oculis-binding protein homolog (873 aa).

Residues Met-1–Lys-14 are compositionally biased toward basic and acidic residues. Residues Met-1–Glu-26 are disordered. 2 FCS-type zinc fingers span residues Asp-142–Ala-180 and Phe-216–Asn-256. Disordered regions lie at residues Arg-308 to Asn-339, Arg-413 to Pro-484, and Lys-550 to Leu-646. The segment covering Ala-318 to Asn-339 has biased composition (polar residues). Residues His-417–Gly-433 are compositionally biased toward low complexity. Residues Ile-460–Pro-484 are compositionally biased toward pro residues. Residues Glu-614–Arg-625 show a composition bias toward basic and acidic residues. The SUMO interaction motif 1 (SIM); mediates the binding to polysumoylated substrates motif lies at Val-620–Thr-624. Ser-629 carries the post-translational modification Phosphoserine. Residues Val-653–Thr-657 carry the SUMO interaction motif 2 (SIM); mediates the binding to polysumoylated substrates motif. A Glycyl lysine isopeptide (Lys-Gly) (interchain with G-Cter in SUMO2) cross-link involves residue Lys-677. The residue at position 699 (Ser-699) is a Phosphoserine. The tract at residues Ala-730–Val-771 is disordered. Positions Glu-739–Pro-754 are enriched in pro residues.

The protein belongs to the SOBP family. In terms of assembly, interacts (via SIM domains) with SUMO1 and SUMO2.

Functionally, implicated in development of the cochlea. In Homo sapiens (Human), this protein is Sine oculis-binding protein homolog.